A 278-amino-acid polypeptide reads, in one-letter code: Probable endonuclease 4 (278 aa).

Residues histidine 70, histidine 108, glutamate 143, aspartate 176, histidine 179, histidine 210, aspartate 223, histidine 225, and glutamate 255 each contribute to the Zn(2+) site.

Belongs to the AP endonuclease 2 family. The cofactor is Zn(2+).

The enzyme catalyses Endonucleolytic cleavage to 5'-phosphooligonucleotide end-products.. Its function is as follows. Endonuclease IV plays a role in DNA repair. It cleaves phosphodiester bonds at apurinic or apyrimidinic (AP) sites, generating a 3'-hydroxyl group and a 5'-terminal sugar phosphate. This Mycoplasmopsis agalactiae (strain NCTC 10123 / CIP 59.7 / PG2) (Mycoplasma agalactiae) protein is Probable endonuclease 4.